Reading from the N-terminus, the 351-residue chain is Probable V-type proton ATPase subunit d (351 aa).

It belongs to the V-ATPase V0D/AC39 subunit family. V-ATPase is a heteromultimeric enzyme composed of a peripheral catalytic V1 complex (components A to H) attached to an integral membrane V0 proton pore complex (components: a, c, c', c'' and d).

Its function is as follows. Subunit of the integral membrane V0 complex of vacuolar ATPase. Vacuolar ATPase is responsible for acidifying a variety of intracellular compartments in eukaryotic cells, thus providing most of the energy required for transport processes in the vacuolar system. The sequence is that of Probable V-type proton ATPase subunit d from Oryza sativa subsp. japonica (Rice).